Here is a 235-residue protein sequence, read N- to C-terminus: Transmembrane protein 215 (235 aa).

The next 2 membrane-spanning stretches (helical) occupy residues 12–32 (LVVALVSVFLVFGFMFTVSGM) and 40–60 (IPLLAIGPAICLPGIAAIALA). Positions 99–158 (SDLESGKGSSDELAKKAGLRGKPSLQGQGELPMASSITTPTPMEEGECQSPGQSGRREET) are disordered.

It is found in the membrane. The chain is Transmembrane protein 215 (TMEM215) from Bos taurus (Bovine).